The sequence spans 310 residues: Bis(hydroxyethyl) terephthalate hydrolase (310 aa).

Residues 1–48 (MQQNPHTHAAPGAARPVLRGVRRRLAAVTAAVAAVLVLGTLTGPGAQA) constitute a signal peptide (tat-type signal). Phe111 is a binding site for bis(2-hydroxyethyl) terephthalate. Ser179 (nucleophile) is an active-site residue. Met180 and Trp204 together coordinate bis(2-hydroxyethyl) terephthalate. Catalysis depends on charge relay system residues Asp225 and His257. An intrachain disulfide couples Cys290 to Cys306.

The protein belongs to the AB hydrolase superfamily. Predicted to be exported by the Tat system. The position of the signal peptide cleavage has not been experimentally proven.

It is found in the secreted. It carries out the reaction bis(2-hydroxyethyl) terephthalate + H2O = 4-[(2-hydroxyethoxy)carbonyl]benzoate + ethylene glycol + H(+). Its function is as follows. Catalyzes the degradation of bis(hydroxyethyl) terephthalate (BHET), a derived-oligomer of the plastic poly(ethylene terephthalate) (PET), hydrolyzing BHET to mono(2-hydroxyethyl) terephthalate (MHET). Shows no activity against PET. This chain is Bis(hydroxyethyl) terephthalate hydrolase, found in Streptomyces coelicolor (strain ATCC BAA-471 / A3(2) / M145).